We begin with the raw amino-acid sequence, 657 residues long: ER degradation-enhancing alpha-mannosidase-like protein 1 (657 aa).

The Cytoplasmic portion of the chain corresponds to 1 to 4; it reads MQWR. The helical; Signal-anchor for type II membrane protein transmembrane segment at 5-25 threads the bilayer; it reads ALVLGLVLLRLGLHGVLWLVF. Over 26 to 657 the chain is Lumenal; it reads GLGPSMGFYQ…RQIDQMVGLI (632 aa). A disordered region spans residues 48-94; it reads SPDGPASPTSGPVGRPGGVSGPSWLQPPGTGAAQSPRKAPRRPGPGM. Asparagine 181, asparagine 198, asparagine 299, asparagine 342, and asparagine 624 each carry an N-linked (GlcNAc...) asparagine glycan.

The protein belongs to the glycosyl hydrolase 47 family. Interacts with DNAJC10. Interacts with DERL2 and DERL3. Binds to SEL1L.

The protein localises to the endoplasmic reticulum membrane. Functionally, extracts misfolded glycoproteins, but not glycoproteins undergoing productive folding, from the calnexin cycle. It is directly involved in endoplasmic reticulum-associated degradation (ERAD) and targets misfolded glycoproteins for degradation in an N-glycan-independent manner, probably by forming a complex with SEL1L. It has low mannosidase activity, catalyzing mannose trimming from Man8GlcNAc2 to Man7GlcNAc2. The chain is ER degradation-enhancing alpha-mannosidase-like protein 1 (EDEM1) from Homo sapiens (Human).